The chain runs to 392 residues: S-adenosylmethionine synthase (392 aa).

ATP is bound at residue histidine 20. Position 22 (aspartate 22) interacts with Mg(2+). Glutamate 48 lines the K(+) pocket. L-methionine is bound by residues glutamate 61 and glutamine 106. The tract at residues 106-116 (QSQDIINAIKK) is flexible loop. ATP is bound by residues 171–173 (DSK), aspartate 248, 254–255 (RK), alanine 271, and lysine 275. Aspartate 248 is an L-methionine binding site. An L-methionine-binding site is contributed by lysine 279.

This sequence belongs to the AdoMet synthase family. Homotetramer; dimer of dimers. Mg(2+) is required as a cofactor. It depends on K(+) as a cofactor.

The protein localises to the cytoplasm. The catalysed reaction is L-methionine + ATP + H2O = S-adenosyl-L-methionine + phosphate + diphosphate. It participates in amino-acid biosynthesis; S-adenosyl-L-methionine biosynthesis; S-adenosyl-L-methionine from L-methionine: step 1/1. Its function is as follows. Catalyzes the formation of S-adenosylmethionine (AdoMet) from methionine and ATP. The overall synthetic reaction is composed of two sequential steps, AdoMet formation and the subsequent tripolyphosphate hydrolysis which occurs prior to release of AdoMet from the enzyme. In Borrelia garinii subsp. bavariensis (strain ATCC BAA-2496 / DSM 23469 / PBi) (Borreliella bavariensis), this protein is S-adenosylmethionine synthase.